The following is a 956-amino-acid chain: MYRPSCLSYVLLVANMWSFAVCANAFIYGSYDPSHNIPIVALMTLCATGLWLSTSVVSFGIRYVRVRVSPEKTQNRTIYVSSGLPHFDPVYGVVKKCEPMGGGPAIELQVNPSWIHLLPTSPAINKVEVGQESAILGSTYSVVETGGEPKSLVAVKSGDSTLGFGARVYHEGMDVLMVPHHVWYNDKPHTALAKNGRSVDTEDWEVEAACADPRIDFVLVKVPTAVWAKLAVRSTKVLAPVHGTAVQTFGGQDSKQLFSGLGKAKALDNAWEFTHTAPTAKGWSGTPLYTRDGIVGMHTGYVDIGTSNRAINMHFIMSCLVSKMETLPPELGYREISLEDVGLRSFEFLEVEIENRGKVKLGKREFAWVPKGKAWADMLDDDDLPLPPKMVNGNLVWADAQESFDGALPLNLLAGGRTQCLAAQIELGDYKFSCGPTHETGGMPFRNCGSSTCKFREVSRKPVADAVTAATKVFPELSELGWPERGSGAEIGSLLLQAGKFVPTKAPSNLEQAYNNLLSRYPRSKPLACFRQGTWSFDAIFEQVVSKATSAEINQKASPGVPLSRLATTNKDLMAQHMQFVAACVTGRVPLLASFEDIHALSPTEMVEMGLCDPVRLFVKQEPHPSRKLKEGRYRLISSVSIVDQLVERMLFGAQNELEIAEWQSIPSKPGMGLSVIHQADAIFRDLRVKHTVCPAAEADISGFDWSVQDWELWADVEMRIVLGSFPPMMARAARNRFSCFMNSVLQLSNGQLLQQELPGIMKSGSYCTSSTNSRIRCLMAELIGSPWCIAMGDDSVEGFVEGAREKYAGLGHLCKDYKPCATTPTGQLYAVEFCSHVIKRNKAFLTSWPKTLYRFLSTPRETLEDLERELASSPMWHKIQSYVRSIPSPDKTARDKSICNGYPLDQEAISTSYSEYSSKSASAEATREAACCAGAQAYPSWGIHGPYCSGDHGEA.

3 helical membrane-spanning segments follow: residues 7-27 (LSYV…NAFI), 37-57 (IPIV…TSVV), and 77-94 (TIYV…YGVV). The region spanning 135-330 (ILGSTYSVVE…VSKMETLPPE (196 aa)) is the Peptidase S39 domain. Residues His181, Asp216, and Ser284 each act as for protease activity in the active site. The RdRp catalytic domain maps to 694–808 (CPAAEADISG…GFVEGAREKY (115 aa)).

Post-translationally, the polyprotein is proteolytically cleaved into several chains by the viral protease.

The protein resides in the host membrane. The catalysed reaction is RNA(n) + a ribonucleoside 5'-triphosphate = RNA(n+1) + diphosphate. In terms of biological role, responsible for cleavage of polyprotein P2A and replicase polyprotein P2AB. Its function is as follows. Covalently attached to the 5' extremity of the genomic and subgenomic RNAs. It may serve as a primer for the replicase. Replicates the viral genome. The protein is Replicase polyprotein P2AB of Glycine max (Soybean).